We begin with the raw amino-acid sequence, 491 residues long: Glucose-6-phosphate exchanger SLC37A2 (491 aa).

The chain crosses the membrane as a helical span at residues 5 to 25 (LAPGIWYRAFILLITFLIYTC). N-linked (GlcNAc...) asparagine glycans are attached at residues Asn-43, Asn-52, and Asn-58. The next 5 membrane-spanning stretches (helical) occupy residues 78-98 (GAVDNAFLVAYAIGMFISGIF), 108-130 (LTAGMLLSGLFTSLFGLGYFWNI), 132-154 (VLWYFVLVQIFNGLVQTTGWPAV), 169-189 (LIMGIWNSHTSVGNILGSLLA), and 200-220 (SFVVPGVITAIMGIITFFFLI). Residues 229-257 (SPPQHHGNPEESQDQPEDPANGPSCNKES) are disordered. 6 helical membrane passes run 292–312 (LCLLFAKLVSYTFLYWLPLYI), 328–348 (TLFDVGGIIGGILAGLVSDYI), 352–372 (ATTCCVMLILAAPMMFLYNHV), 377–397 (IGISIVMLLICGALVNGPYAL), 424–444 (AIIDGTGSIGAALGPLLAGLI), and 452–472 (VFYMLIAADVLACLLLCRLVY).

It belongs to the major facilitator superfamily. Organophosphate:Pi antiporter (OPA) (TC 2.A.1.4) family.

The protein localises to the endoplasmic reticulum membrane. The enzyme catalyses D-glucose 6-phosphate(in) + phosphate(out) = D-glucose 6-phosphate(out) + phosphate(in). Its activity is regulated as follows. Inhibited by vanadate but not by chlorogenic acid. In terms of biological role, inorganic phosphate and glucose-6-phosphate antiporter. May transport cytoplasmic glucose-6-phosphate into the lumen of the endoplasmic reticulum and translocate inorganic phosphate into the opposite direction. Independent of a lumenal glucose-6-phosphatase. May not play a role in homeostatic regulation of blood glucose levels. In Bos taurus (Bovine), this protein is Glucose-6-phosphate exchanger SLC37A2.